The chain runs to 464 residues: Probable pectin lyase F (464 aa).

A signal peptide spans 1–20 (MAIIRSVIAATALLGAAVNA). Residues C80 and C103 are joined by a disulfide bond. N-linked (GlcNAc...) asparagine glycosylation occurs at N126. The active site involves R252. A disulfide bond links C319 and C327. A disordered region spans residues 424 to 464 (EHEVSTPAVPTPTPVPSSVGSHGSTAGSSHPPAFSRTSFES). Residues 439-448 (PSSVGSHGST) show a composition bias toward low complexity.

This sequence belongs to the polysaccharide lyase 1 family.

Its subcellular location is the secreted. The enzyme catalyses Eliminative cleavage of (1-&gt;4)-alpha-D-galacturonan methyl ester to give oligosaccharides with 4-deoxy-6-O-methyl-alpha-D-galact-4-enuronosyl groups at their non-reducing ends.. Pectinolytic enzymes consist of four classes of enzymes: pectin lyase, polygalacturonase, pectin methylesterase and rhamnogalacturonase. Among pectinolytic enzymes, pectin lyase is the most important in depolymerization of pectin, since it cleaves internal glycosidic bonds of highly methylated pectins. In Emericella nidulans (strain FGSC A4 / ATCC 38163 / CBS 112.46 / NRRL 194 / M139) (Aspergillus nidulans), this protein is Probable pectin lyase F (pelF).